The following is a 263-amino-acid chain: UPF0739 protein C1orf74 homolog (263 aa).

The protein belongs to the UPF0739 family.

In Rattus norvegicus (Rat), this protein is UPF0739 protein C1orf74 homolog.